The sequence spans 313 residues: Ribosomal RNA small subunit methyltransferase H (313 aa).

S-adenosyl-L-methionine-binding positions include 35 to 37 (GGH), Asp55, Phe81, Asp103, and Gln110.

The protein belongs to the methyltransferase superfamily. RsmH family.

It is found in the cytoplasm. It catalyses the reaction cytidine(1402) in 16S rRNA + S-adenosyl-L-methionine = N(4)-methylcytidine(1402) in 16S rRNA + S-adenosyl-L-homocysteine + H(+). Specifically methylates the N4 position of cytidine in position 1402 (C1402) of 16S rRNA. The sequence is that of Ribosomal RNA small subunit methyltransferase H from Pseudomonas syringae pv. syringae (strain B728a).